A 231-amino-acid polypeptide reads, in one-letter code: 5'-methylthioadenosine/S-adenosylhomocysteine nucleosidase (231 aa).

Glu12 acts as the Proton acceptor in catalysis. Substrate-binding positions include Gly78, Met153, and Met174 to Glu175. Asp198 functions as the Proton donor in the catalytic mechanism.

This sequence belongs to the PNP/UDP phosphorylase family. MtnN subfamily.

The enzyme catalyses S-adenosyl-L-homocysteine + H2O = S-(5-deoxy-D-ribos-5-yl)-L-homocysteine + adenine. It carries out the reaction S-methyl-5'-thioadenosine + H2O = 5-(methylsulfanyl)-D-ribose + adenine. It catalyses the reaction 5'-deoxyadenosine + H2O = 5-deoxy-D-ribose + adenine. It functions in the pathway amino-acid biosynthesis; L-methionine biosynthesis via salvage pathway; S-methyl-5-thio-alpha-D-ribose 1-phosphate from S-methyl-5'-thioadenosine (hydrolase route): step 1/2. Catalyzes the irreversible cleavage of the glycosidic bond in both 5'-methylthioadenosine (MTA) and S-adenosylhomocysteine (SAH/AdoHcy) to adenine and the corresponding thioribose, 5'-methylthioribose and S-ribosylhomocysteine, respectively. Also cleaves 5'-deoxyadenosine, a toxic by-product of radical S-adenosylmethionine (SAM) enzymes, into 5-deoxyribose and adenine. This chain is 5'-methylthioadenosine/S-adenosylhomocysteine nucleosidase, found in Psychromonas ingrahamii (strain DSM 17664 / CCUG 51855 / 37).